The chain runs to 581 residues: Intermediate filament protein ifa-3 (581 aa).

The tract at residues 1–33 (MADPDSYRSSITSRPAFNRTVTSSTQNYGTPAS) is disordered. The interval 1 to 74 (MADPDSYRSS…RDDREREKKE (74 aa)) is head. Positions 7–33 (YRSSITSRPAFNRTVTSSTQNYGTPAS) are enriched in polar residues. The 354-residue stretch at 71 to 424 (EKKEITELND…RMLEGNSEEN (354 aa)) folds into the IF rod domain. The tract at residues 75-106 (ITELNDRLASYIGKVRFLAAQNRKLEADLNVL) is coil 1A. The segment at 107–120 (QSRFGKSTGSVKIM) is linker 1. The segment at 121–258 (YEMEITTATN…RGFETELKDL (138 aa)) is coil 1B. The tract at residues 259–276 (QAQAARDTTSENREYFKN) is linker 12. The tract at residues 277 to 424 (ELMNSIRDIR…RMLEGNSEEN (148 aa)) is coil 2. The tail stretch occupies residues 425 to 578 (GLRQLVEKVV…THMQRQSQQT (154 aa)). The 118-residue stretch at 457 to 574 (SRTSYQRSAK…EERATHMQRQ (118 aa)) folds into the LTD domain.

The protein belongs to the intermediate filament family. As to quaternary structure, forms some heteromeric filaments with ifb-1. In terms of tissue distribution, expressed in the embryonic and larval hypodermis. Also expressed in the ventral nerve cord of larvae.

The protein resides in the cytoplasm. Its function is as follows. Cytoplasmic intermediate filaments provide mechanical strength to cells. Essential protein, involved in attachment structures in epidermal cells that connect muscles to the external cuticle. Required for epidermal morphogenesis in embryos. Probable component of embryonic epidermal attachment structures. The sequence is that of Intermediate filament protein ifa-3 (ifa-3) from Caenorhabditis elegans.